Reading from the N-terminus, the 198-residue chain is Endoribonuclease YbeY (198 aa).

Positions 156, 160, and 166 each coordinate Zn(2+).

The protein belongs to the endoribonuclease YbeY family. It depends on Zn(2+) as a cofactor.

The protein localises to the cytoplasm. Its function is as follows. Single strand-specific metallo-endoribonuclease involved in late-stage 70S ribosome quality control and in maturation of the 3' terminus of the 16S rRNA. This chain is Endoribonuclease YbeY, found in Cupriavidus necator (strain ATCC 17699 / DSM 428 / KCTC 22496 / NCIMB 10442 / H16 / Stanier 337) (Ralstonia eutropha).